A 308-amino-acid chain; its full sequence is tRNA pseudouridine synthase B (308 aa).

D49 functions as the Nucleophile in the catalytic mechanism.

Belongs to the pseudouridine synthase TruB family. Type 1 subfamily.

The catalysed reaction is uridine(55) in tRNA = pseudouridine(55) in tRNA. In terms of biological role, responsible for synthesis of pseudouridine from uracil-55 in the psi GC loop of transfer RNAs. The chain is tRNA pseudouridine synthase B from Nitrosococcus oceani (strain ATCC 19707 / BCRC 17464 / JCM 30415 / NCIMB 11848 / C-107).